The chain runs to 203 residues: ATP-dependent Clp protease proteolytic subunit 2 (203 aa).

Serine 97 serves as the catalytic Nucleophile. Histidine 122 is a catalytic residue.

The protein belongs to the peptidase S14 family. In terms of assembly, fourteen ClpP subunits assemble into 2 heptameric rings which stack back to back to give a disk-like structure with a central cavity, resembling the structure of eukaryotic proteasomes.

The protein resides in the cytoplasm. It catalyses the reaction Hydrolysis of proteins to small peptides in the presence of ATP and magnesium. alpha-casein is the usual test substrate. In the absence of ATP, only oligopeptides shorter than five residues are hydrolyzed (such as succinyl-Leu-Tyr-|-NHMec, and Leu-Tyr-Leu-|-Tyr-Trp, in which cleavage of the -Tyr-|-Leu- and -Tyr-|-Trp bonds also occurs).. In terms of biological role, cleaves peptides in various proteins in a process that requires ATP hydrolysis. Has a chymotrypsin-like activity. Plays a major role in the degradation of misfolded proteins. The polypeptide is ATP-dependent Clp protease proteolytic subunit 2 (Myxococcus xanthus (strain DK1622)).